The following is a 252-amino-acid chain: Imidazole glycerol phosphate synthase subunit HisF (252 aa).

Residues Asp-11 and Asp-130 contribute to the active site.

This sequence belongs to the HisA/HisF family. As to quaternary structure, heterodimer of HisH and HisF.

It localises to the cytoplasm. The enzyme catalyses 5-[(5-phospho-1-deoxy-D-ribulos-1-ylimino)methylamino]-1-(5-phospho-beta-D-ribosyl)imidazole-4-carboxamide + L-glutamine = D-erythro-1-(imidazol-4-yl)glycerol 3-phosphate + 5-amino-1-(5-phospho-beta-D-ribosyl)imidazole-4-carboxamide + L-glutamate + H(+). The protein operates within amino-acid biosynthesis; L-histidine biosynthesis; L-histidine from 5-phospho-alpha-D-ribose 1-diphosphate: step 5/9. Its function is as follows. IGPS catalyzes the conversion of PRFAR and glutamine to IGP, AICAR and glutamate. The HisF subunit catalyzes the cyclization activity that produces IGP and AICAR from PRFAR using the ammonia provided by the HisH subunit. The sequence is that of Imidazole glycerol phosphate synthase subunit HisF from Hydrogenobaculum sp. (strain Y04AAS1).